Reading from the N-terminus, the 168-residue chain is Plastocyanin B, chloroplastic (168 aa).

The N-terminal 69 residues, 1–69, are a transit peptide targeting the chloroplast; the sequence is MAAVTSAAVS…SAMIASNAMA (69 aa). A Plastocyanin-like domain is found at 70 to 168; the sequence is VDVLLGADDG…AGMVGKVIVN (99 aa). 4 residues coordinate Cu cation: His106, Cys153, His156, and Met161.

It belongs to the plastocyanin family. Requires Cu(2+) as cofactor.

It is found in the plastid. The protein localises to the chloroplast thylakoid membrane. Functionally, participates in electron transfer between P700 and the cytochrome b6-f complex in photosystem I. This is Plastocyanin B, chloroplastic (PETE) from Populus nigra (Lombardy poplar).